The primary structure comprises 478 residues: Protein nucleotidyltransferase YdiU (478 aa).

8 residues coordinate ATP: G84, G86, R87, K107, D119, G120, R170, and R177. The Proton acceptor role is filled by D246. N247 and D256 together coordinate Mg(2+). D256 is a binding site for ATP.

It belongs to the SELO family. Mg(2+) serves as cofactor. The cofactor is Mn(2+).

The catalysed reaction is L-seryl-[protein] + ATP = 3-O-(5'-adenylyl)-L-seryl-[protein] + diphosphate. The enzyme catalyses L-threonyl-[protein] + ATP = 3-O-(5'-adenylyl)-L-threonyl-[protein] + diphosphate. It carries out the reaction L-tyrosyl-[protein] + ATP = O-(5'-adenylyl)-L-tyrosyl-[protein] + diphosphate. It catalyses the reaction L-histidyl-[protein] + UTP = N(tele)-(5'-uridylyl)-L-histidyl-[protein] + diphosphate. The catalysed reaction is L-seryl-[protein] + UTP = O-(5'-uridylyl)-L-seryl-[protein] + diphosphate. The enzyme catalyses L-tyrosyl-[protein] + UTP = O-(5'-uridylyl)-L-tyrosyl-[protein] + diphosphate. Nucleotidyltransferase involved in the post-translational modification of proteins. It can catalyze the addition of adenosine monophosphate (AMP) or uridine monophosphate (UMP) to a protein, resulting in modifications known as AMPylation and UMPylation. This is Protein nucleotidyltransferase YdiU from Escherichia coli (strain ATCC 8739 / DSM 1576 / NBRC 3972 / NCIMB 8545 / WDCM 00012 / Crooks).